Reading from the N-terminus, the 213-residue chain is Ribosomal RNA small subunit methyltransferase G (213 aa).

S-adenosyl-L-methionine is bound by residues glycine 81, leucine 86, 132–133 (VE), and arginine 147.

Belongs to the methyltransferase superfamily. RNA methyltransferase RsmG family.

The protein localises to the cytoplasm. It carries out the reaction guanosine(527) in 16S rRNA + S-adenosyl-L-methionine = N(7)-methylguanosine(527) in 16S rRNA + S-adenosyl-L-homocysteine. Its function is as follows. Specifically methylates the N7 position of guanine in position 527 of 16S rRNA. This Mannheimia succiniciproducens (strain KCTC 0769BP / MBEL55E) protein is Ribosomal RNA small subunit methyltransferase G.